The primary structure comprises 329 residues: T-lymphocyte activation antigen CD86 (329 aa).

An N-terminal signal peptide occupies residues Met1–Ala23. The Extracellular portion of the chain corresponds to Ala24–Pro247. N-linked (GlcNAc...) asparagine glycosylation is found at Asn33, Asn47, Asn135, Asn146, Asn154, Asn177, Asn192, and Asn213. In terms of domain architecture, Ig-like V-type spans Asn33–Ser131. A disulfide bridge links Cys40 with Cys110. Residues Asn150 to Thr225 enclose the Ig-like C2-type domain. Cysteines 157 and 218 form a disulfide. The chain crosses the membrane as a helical span at residues Trp248–Trp268. Residues Lys269 to Phe329 are Cytoplasmic-facing. The interval Arg277–Phe329 is disordered. Positions Met287–Arg312 are enriched in basic and acidic residues.

As to quaternary structure, homodimer. Interacts with MARCH8. Interacts (via cytoplasmic domain) with PHB1 and PHB2; the interactions increases after priming with CD40. Interacts with CD28. (Microbial infection) Interacts with adenovirus subgroup b fiber protein. In terms of assembly, (Microbial infection) Interacts with Orthopoxvirus OPG038/M2 protein, inhibiting the interaction with CTLA4 and CD28. Post-translationally, polyubiquitinated; which is promoted by MARCH8 and results in endocytosis and lysosomal degradation. Expressed by activated B-lymphocytes and monocytes.

Its subcellular location is the cell membrane. In terms of biological role, receptor involved in the costimulatory signal essential for T-lymphocyte proliferation and interleukin-2 production, by binding CD28 or CTLA-4. May play a critical role in the early events of T-cell activation and costimulation of naive T-cells, such as deciding between immunity and anergy that is made by T-cells within 24 hours after activation. Also involved in the regulation of B cells function, plays a role in regulating the level of IgG(1) produced. Upon CD40 engagement, activates NF-kappa-B signaling pathway via phospholipase C and protein kinase C activation. Interferes with the formation of CD86 clusters, and thus acts as a negative regulator of T-cell activation. Functionally, (Microbial infection) Acts as a receptor for adenovirus subgroup B. The sequence is that of T-lymphocyte activation antigen CD86 (CD86) from Homo sapiens (Human).